Here is a 132-residue protein sequence, read N- to C-terminus: Intraflagellar transport protein 20 homolog A (132 aa).

A coiled-coil region spans residues 87–112 (EAQQQQLYALIAEKKMQLERYRIEYD).

It is found in the golgi apparatus. The protein resides in the cis-Golgi network. The protein localises to the cytoplasm. Its subcellular location is the cytoskeleton. It localises to the microtubule organizing center. It is found in the centrosome. The protein resides in the centriole. The protein localises to the cell projection. Its subcellular location is the cilium. Its function is as follows. Involved in ciliary process assembly. May play a role in the trafficking of ciliary membrane proteins from the Golgi complex to the cilium. Regulates the platelet-derived growth factor receptor-alpha (PDGFRA) signaling pathway. Plays an important role in spermatogenesis, particularly spermiogenesis, when germ cells form flagella. The sequence is that of Intraflagellar transport protein 20 homolog A (ift20-a) from Xenopus laevis (African clawed frog).